The following is a 513-amino-acid chain: ATP synthase subunit alpha 2 (513 aa).

An ATP-binding site is contributed by 152–159 (GDSKTGKT).

The protein belongs to the ATPase alpha/beta chains family. In terms of assembly, F-type ATPases have 2 components, CF(1) - the catalytic core - and CF(0) - the membrane proton channel. CF(1) has five subunits: alpha(3), beta(3), gamma(1), delta(1), epsilon(1). CF(0) has three main subunits: a(1), b(2) and c(9-12). The alpha and beta chains form an alternating ring which encloses part of the gamma chain. CF(1) is attached to CF(0) by a central stalk formed by the gamma and epsilon chains, while a peripheral stalk is formed by the delta and b chains.

The protein resides in the cell membrane. It catalyses the reaction ATP + H2O + 4 H(+)(in) = ADP + phosphate + 5 H(+)(out). Its function is as follows. Produces ATP from ADP in the presence of a proton gradient across the membrane. The alpha chain is a regulatory subunit. The chain is ATP synthase subunit alpha 2 from Mycoplasmopsis pulmonis (strain UAB CTIP) (Mycoplasma pulmonis).